The primary structure comprises 640 residues: MPIITLPDGNKKKFDQPVTIMEVAESLGPGLAKAAIAGRVNGVLLDTCIPIEKDSEVNIITAKDQDGIETIRHSFAHLIGHAVKQLYPEAKMAIGPVIEDGFYYDIAYDQPFTPKDLEAIEARMKELVKLDYDVNVEIVSREEAHKEFEKRCEPYKIEIVDEIPENEIIKLYRHQEYTDMCRGPHVPNTRHLRTFKLMKVSGAYWRGDSNKTMLQRIYGTAWGSSKELKAYLKRLEEAEKRDHRRIAKQMSLFHTQEEAPGMIFWHAKGWAIYQVLEQYIRETLSLHAYQEIRTPQVVDRSLWEKSGHWEKFKDDMFTTTSENREYAIKPMNCPCHVQIFNQGLKSYRDLPIRLAEFGSCLRNEPSGSLHGLMRVRNFVQDDAHIFCTELQVQEEVSKFIDLVFEIYRSFGFDSVLIKLSTRPEKRVGSDEIWDKSEKALSDALDAKGLAWDLLPGEGAFYGPKIEFSLKDCLGRVWQCGTIQVDFSMPERLGASYVAEDSQRRTPVMLHRAILGSFERFIGILIEHYAGRMPVWLAPVQVAVMGITDRNAQTCQDVCKKLSALEYRTEVDLRNEKIGFKVREHTLQRVPFLIIIGDKEQQSGEVAVRTREGKDFGSMPLNSFISLLDEAIALKGRSGVS.

One can recognise a TGS domain in the interval 1–61 (MPIITLPDGN…EKDSEVNIIT (61 aa)). The tract at residues 242-533 (DHRRIAKQMS…LIEHYAGRMP (292 aa)) is catalytic. Positions 333, 384, and 510 each coordinate Zn(2+).

The protein belongs to the class-II aminoacyl-tRNA synthetase family. Homodimer. Zn(2+) serves as cofactor.

It is found in the cytoplasm. The catalysed reaction is tRNA(Thr) + L-threonine + ATP = L-threonyl-tRNA(Thr) + AMP + diphosphate + H(+). Its function is as follows. Catalyzes the attachment of threonine to tRNA(Thr) in a two-step reaction: L-threonine is first activated by ATP to form Thr-AMP and then transferred to the acceptor end of tRNA(Thr). Also edits incorrectly charged L-seryl-tRNA(Thr). The chain is Threonine--tRNA ligase from Prochlorococcus marinus (strain MIT 9303).